The sequence spans 325 residues: Pseudouridylate synthase TRUB2, mitochondrial (325 aa).

Asp101 (nucleophile) is an active-site residue. Residues 292-325 (QTEGVSRGNPDREAAEGPIPGPSRGAEGEGELRA) form a disordered region.

This sequence belongs to the pseudouridine synthase TruB family.

It localises to the mitochondrion matrix. The catalysed reaction is a uridine in mRNA = a pseudouridine in mRNA. It catalyses the reaction uridine(55) in tRNA = pseudouridine(55) in tRNA. Functionally, minor enzyme contributing to the isomerization of uridine to pseudouridine (pseudouridylation) of specific mitochondrial mRNAs (mt-mRNAs) such as COXI and COXIII mt-mRNAs, modulating the efficiency of mitochondrial protein synthesis without changes in transcript abundance or stability. Also catalyzes pseudouridylation of some tRNAs, including synthesis of pseudouridine(55) from uracil-55, in the psi GC loop of a subset of tRNAs. The polypeptide is Pseudouridylate synthase TRUB2, mitochondrial (Xenopus tropicalis (Western clawed frog)).